The primary structure comprises 228 residues: Phosphatidylserine decarboxylase proenzyme (228 aa).

Ser197 serves as the catalytic Schiff-base intermediate with substrate; via pyruvic acid. Ser197 is subject to Pyruvic acid (Ser); by autocatalysis.

This sequence belongs to the phosphatidylserine decarboxylase family. PSD-A subfamily. Heterodimer of a large membrane-associated beta subunit and a small pyruvoyl-containing alpha subunit. Pyruvate serves as cofactor. Post-translationally, is synthesized initially as an inactive proenzyme. Formation of the active enzyme involves a self-maturation process in which the active site pyruvoyl group is generated from an internal serine residue via an autocatalytic post-translational modification. Two non-identical subunits are generated from the proenzyme in this reaction, and the pyruvate is formed at the N-terminus of the alpha chain, which is derived from the carboxyl end of the proenzyme. The post-translation cleavage follows an unusual pathway, termed non-hydrolytic serinolysis, in which the side chain hydroxyl group of the serine supplies its oxygen atom to form the C-terminus of the beta chain, while the remainder of the serine residue undergoes an oxidative deamination to produce ammonia and the pyruvoyl prosthetic group on the alpha chain.

It is found in the cell membrane. The enzyme catalyses a 1,2-diacyl-sn-glycero-3-phospho-L-serine + H(+) = a 1,2-diacyl-sn-glycero-3-phosphoethanolamine + CO2. It functions in the pathway phospholipid metabolism; phosphatidylethanolamine biosynthesis; phosphatidylethanolamine from CDP-diacylglycerol: step 2/2. Catalyzes the formation of phosphatidylethanolamine (PtdEtn) from phosphatidylserine (PtdSer). In Bacteroides fragilis (strain ATCC 25285 / DSM 2151 / CCUG 4856 / JCM 11019 / LMG 10263 / NCTC 9343 / Onslow / VPI 2553 / EN-2), this protein is Phosphatidylserine decarboxylase proenzyme.